Consider the following 366-residue polypeptide: Tyrosyl-DNA phosphodiesterase 2 (366 aa).

Met-1 bears the N-acetylmethionine mark. Low complexity predominate over residues 1 to 22 (MASGSSSDAAESAEPAAAPAAA). Residues 1-30 (MASGSSSDAAESAEPAAAPAAAETEEDQVK) are disordered. A Glycyl lysine isopeptide (Lys-Gly) (interchain with G-Cter in SUMO2) cross-link involves residue Lys-30. A Phosphothreonine; by ACVR1B modification is found at Thr-95. The tract at residues 126-130 (NIDGL) is interaction with 5' end of substrate DNA. Mg(2+) contacts are provided by Asp-128 and Glu-158. Residues 232–237 (HLESTR) are interaction with 5' end of substrate DNA. Asp-268 functions as the Proton donor/acceptor in the catalytic mechanism. Residues 270-272 (NLR) form an interaction with 5' end of substrate DNA region.

This sequence belongs to the CCR4/nocturin family. In terms of assembly, interacts with TRAF2, TRAF3, TRAF5, TRAF6, TNFRSF8/CD30, TNFRSF5/CD40, TNFRSF1B/TNF-R75, ETS1, ETS2, FLI1, SMAD3 and ACVR1B/ALK4. It depends on Mg(2+) as a cofactor. Requires Mn(2+) as cofactor. Ubiquitinated by TRAF6.

The protein localises to the nucleus. The protein resides in the PML body. It is found in the nucleolus. It localises to the cytoplasm. In terms of biological role, DNA repair enzyme that can remove a variety of covalent adducts from DNA through hydrolysis of a 5'-phosphodiester bond, giving rise to DNA with a free 5' phosphate. Catalyzes the hydrolysis of dead-end complexes between DNA and the topoisomerase 2 (TOP2) active site tyrosine residue. The 5'-tyrosyl DNA phosphodiesterase activity can enable the repair of TOP2-induced DNA double-strand breaks/DSBs without the need for nuclease activity, creating a 'clean' DSB with 5'-phosphate termini that are ready for ligation. Thereby, protects the transcription of many genes involved in neurological development and maintenance from the abortive activity of TOP2. Hydrolyzes 5'-phosphoglycolates on protruding 5' ends on DSBs due to DNA damage by radiation and free radicals. Has preference for single-stranded DNA or duplex DNA with a 4 base pair overhang as substrate. Also has 3'-tyrosyl DNA phosphodiesterase activity, but less efficiently and much slower than TDP1. Constitutes the major if not only 5'-tyrosyl-DNA phosphodiesterase in cells. Also acts as an adapter by participating in the specific activation of MAP3K7/TAK1 in response to TGF-beta: associates with components of the TGF-beta receptor-TRAF6-TAK1 signaling module and promotes their ubiquitination dependent complex formation. Involved in non-canonical TGF-beta induced signaling routes. May also act as a negative regulator of ETS1 and may inhibit NF-kappa-B activation. Acts as a regulator of ribosome biogenesis following stress. This is Tyrosyl-DNA phosphodiesterase 2 (Tdp2) from Rattus norvegicus (Rat).